A 440-amino-acid polypeptide reads, in one-letter code: Tol-Pal system protein TolB (440 aa).

An N-terminal signal peptide occupies residues 1–21 (MKIFGKWLLVTLLICSMPVKA).

The protein belongs to the TolB family. In terms of assembly, the Tol-Pal system is composed of five core proteins: the inner membrane proteins TolA, TolQ and TolR, the periplasmic protein TolB and the outer membrane protein Pal. They form a network linking the inner and outer membranes and the peptidoglycan layer.

The protein localises to the periplasm. In terms of biological role, part of the Tol-Pal system, which plays a role in outer membrane invagination during cell division and is important for maintaining outer membrane integrity. The protein is Tol-Pal system protein TolB of Shewanella halifaxensis (strain HAW-EB4).